We begin with the raw amino-acid sequence, 416 residues long: MDILNELEWRGAINQVTDEEGLRKLTSEDKIALYCGTDPTGDSLHIGHLIPFMILKRFQLAGHHPVIIIGGGTGAIGDPSGRKSERQLQTMDQVHHNEEALTAQMKKLFGTENFTIVNNYEWLSKISLLDFLRDYGKLFNINTMLNKEVVASRLDAGISFTEFTYQILQSVDFLHLYRHNDVQLQIGGSDQWGNITAGIDLIHKVEGPDTKVYGLTIPLMLKADGTKFGKTAGGAIWLDPEKTSPYEFYQFWINQDDRDVIKYLKYFTFLSKEEIDDLAEKVEKEPWKREAQRRLAQEVTKFVHGQEAVEEAERISKALFSGDVADLSVAEIEQGFKNMPSVDVENKKENIIIWLTDNGIEPSRRQARQDVSSGAIRINGEKVDDVDAEIDPQAHFAGKFVIVRKGKKHYYLARVK.

Tyrosine 34 contributes to the L-tyrosine binding site. The 'HIGH' region motif lies at proline 39–histidine 48. L-tyrosine-binding residues include tyrosine 165 and glutamine 169. Positions lysine 227 to threonine 231 match the 'KMSKS' region motif. Lysine 230 contributes to the ATP binding site. An S4 RNA-binding domain is found at glutamate 349 to lysine 416.

Belongs to the class-I aminoacyl-tRNA synthetase family. TyrS type 1 subfamily. As to quaternary structure, homodimer.

The protein resides in the cytoplasm. It catalyses the reaction tRNA(Tyr) + L-tyrosine + ATP = L-tyrosyl-tRNA(Tyr) + AMP + diphosphate + H(+). Its function is as follows. Catalyzes the attachment of tyrosine to tRNA(Tyr) in a two-step reaction: tyrosine is first activated by ATP to form Tyr-AMP and then transferred to the acceptor end of tRNA(Tyr). The sequence is that of Tyrosine--tRNA ligase from Limosilactobacillus reuteri (strain DSM 20016) (Lactobacillus reuteri).